Consider the following 418-residue polypeptide: MLYSLFYFLSSLNVPGARLFRYISFRSVLSFSLSLIISVLIGERIIRFLQRHQAGETIRNLGLEGQIQKKGTPTMGGIIIIIAILIPVLLLARLSNIYVLLMLITTIWLGILGLIDDCIKVIWKHKEGLSGKIKIIAQVGLGLIVGLIVYLSPNIVMYENVEIRQQGGRKTVSYTPPLKSTQTTVPFFKNNNLDYRDLTAFMTNHRTAATWILFVLITVFIVTAVSNGANLTDGLDGLTAGSSAIIGVVLGILAYVSANLGFAAYLNIMYIPGCGELTVFASAFVGACMGFLWHNAFPAQVFMGDIGSLTLGGIIAVFAIIIHKELLLPMLCGIFFTESLSVMIQVAYFKYSKRKTGMGKRIFKMTPIHHHFQKGGSEEVNVIIQKPLNAIPESKIVVRFWLIGILLAALTVVTLKIR.

Transmembrane regions (helical) follow at residues 22-42, 72-92, 95-115, 135-155, 208-228, 244-264, 277-297, 302-322, 326-346, and 395-415; these read YISFRSVLSFSLSLIISVLIG, TPTMGGIIIIIAILIPVLLLA, SNIYVLLMLITTIWLGILGLI, IIAQVGLGLIVGLIVYLSPNI, AATWILFVLITVFIVTAVSNG, AIIGVVLGILAYVSANLGFAA, LTVFASAFVGACMGFLWHNAF, FMGDIGSLTLGGIIAVFAIII, LLLPMLCGIFFTESLSVMIQV, and KIVVRFWLIGILLAALTVVTL.

This sequence belongs to the glycosyltransferase 4 family. MraY subfamily. The cofactor is Mg(2+).

Its subcellular location is the cell inner membrane. The catalysed reaction is UDP-N-acetyl-alpha-D-muramoyl-L-alanyl-gamma-D-glutamyl-meso-2,6-diaminopimeloyl-D-alanyl-D-alanine + di-trans,octa-cis-undecaprenyl phosphate = di-trans,octa-cis-undecaprenyl diphospho-N-acetyl-alpha-D-muramoyl-L-alanyl-D-glutamyl-meso-2,6-diaminopimeloyl-D-alanyl-D-alanine + UMP. Its pathway is cell wall biogenesis; peptidoglycan biosynthesis. In terms of biological role, catalyzes the initial step of the lipid cycle reactions in the biosynthesis of the cell wall peptidoglycan: transfers peptidoglycan precursor phospho-MurNAc-pentapeptide from UDP-MurNAc-pentapeptide onto the lipid carrier undecaprenyl phosphate, yielding undecaprenyl-pyrophosphoryl-MurNAc-pentapeptide, known as lipid I. The protein is Phospho-N-acetylmuramoyl-pentapeptide-transferase of Azobacteroides pseudotrichonymphae genomovar. CFP2.